A 249-amino-acid polypeptide reads, in one-letter code: DNA repair protein RecO (249 aa).

The protein belongs to the RecO family.

Functionally, involved in DNA repair and RecF pathway recombination. The chain is DNA repair protein RecO from Lawsonia intracellularis (strain PHE/MN1-00).